Here is a 100-residue protein sequence, read N- to C-terminus: Putative antiporter subunit mnhF2 (100 aa).

3 helical membrane-spanning segments follow: residues 5–25, 38–60, and 65–87; these read FTQI…LVCL, VVSF…VIFN, and LDSI…RFIG.

Belongs to the CPA3 antiporters (TC 2.A.63) subunit F family. In terms of assembly, may form a heterooligomeric complex that consists of seven subunits: mnhA2, mnhB2, mnhC2, mnhD2, mnhE2, mnhF2 and mnhG2.

The protein resides in the cell membrane. The chain is Putative antiporter subunit mnhF2 (mnhF2) from Staphylococcus epidermidis (strain ATCC 35984 / DSM 28319 / BCRC 17069 / CCUG 31568 / BM 3577 / RP62A).